The following is a 478-amino-acid chain: Isoeugenol monooxygenase (478 aa).

Fe cation is bound by residues His167, His218, His282, and His471.

This sequence belongs to the carotenoid oxygenase family. In terms of assembly, monomer. Requires Fe(2+) as cofactor.

The enzyme catalyses (E)-isoeugenol + O2 = vanillin + acetaldehyde. With respect to regulation, inhibited by HgCl(2), AgNO(3), CuCl(2), phenylhydrazine, 8-hydroxyquinoline, R-cycloserine and p-chloromercuribenzoic acid. Functionally, involved in isoeugenol degradation. Catalyzes the oxidative cleavage of the side chain double-bond of isoeugenol to form vanillin and acetaldehyde. This chain is Isoeugenol monooxygenase, found in Pseudomonas putida (Arthrobacter siderocapsulatus).